The sequence spans 616 residues: Dihydroxy-acid dehydratase (616 aa).

Aspartate 81 serves as a coordination point for Mg(2+). Cysteine 122 is a binding site for [2Fe-2S] cluster. Positions 123 and 124 each coordinate Mg(2+). N6-carboxylysine is present on lysine 124. Cysteine 195 is a [2Fe-2S] cluster binding site. Residue glutamate 491 coordinates Mg(2+). Catalysis depends on serine 517, which acts as the Proton acceptor.

This sequence belongs to the IlvD/Edd family. Homodimer. It depends on [2Fe-2S] cluster as a cofactor. Mg(2+) serves as cofactor.

The catalysed reaction is (2R)-2,3-dihydroxy-3-methylbutanoate = 3-methyl-2-oxobutanoate + H2O. The enzyme catalyses (2R,3R)-2,3-dihydroxy-3-methylpentanoate = (S)-3-methyl-2-oxopentanoate + H2O. The protein operates within amino-acid biosynthesis; L-isoleucine biosynthesis; L-isoleucine from 2-oxobutanoate: step 3/4. It functions in the pathway amino-acid biosynthesis; L-valine biosynthesis; L-valine from pyruvate: step 3/4. Functions in the biosynthesis of branched-chain amino acids. Catalyzes the dehydration of (2R,3R)-2,3-dihydroxy-3-methylpentanoate (2,3-dihydroxy-3-methylvalerate) into 2-oxo-3-methylpentanoate (2-oxo-3-methylvalerate) and of (2R)-2,3-dihydroxy-3-methylbutanoate (2,3-dihydroxyisovalerate) into 2-oxo-3-methylbutanoate (2-oxoisovalerate), the penultimate precursor to L-isoleucine and L-valine, respectively. This Klebsiella pneumoniae subsp. pneumoniae (strain ATCC 700721 / MGH 78578) protein is Dihydroxy-acid dehydratase.